Here is a 356-residue protein sequence, read N- to C-terminus: Vesicular integral-membrane protein VIP36 (356 aa).

The N-terminal stretch at M1–A44 is a signal peptide. Residues D45 to R322 lie on the Lumenal side of the membrane. An L-type lectin-like domain is found at E52–L276. Positions 96 and 131 each coordinate a carbohydrate. Ca(2+) is bound by residues D162, Y164, and N166. Residue Y164 to N166 participates in a carbohydrate binding. N183 is a glycosylation site (N-linked (GlcNAc...) asparagine). H190 is an a carbohydrate binding site. D193 is a Ca(2+) binding site. An intrachain disulfide couples C202 to C239. Position 260–262 (G260–L262) interacts with a carbohydrate. A helical membrane pass occupies residues V323 to F345. The Cytoplasmic portion of the chain corresponds to Q346–Y356.

As to quaternary structure, monomer. Ca(2+) serves as cofactor. In terms of tissue distribution, expressed in kidney, liver, intestine, lung, spleen and heart. Low expression in brain.

The protein resides in the golgi apparatus membrane. In terms of biological role, plays a role as an intracellular lectin in the early secretory pathway. Interacts with N-acetyl-D-galactosamine and high-mannose type glycans and may also bind to O-linked glycans. Involved in the transport and sorting of glycoproteins carrying high mannose-type glycans. The polypeptide is Vesicular integral-membrane protein VIP36 (LMAN2) (Canis lupus familiaris (Dog)).